Consider the following 219-residue polypeptide: Protein-methionine-sulfoxide reductase heme-binding subunit MsrQ (219 aa).

The next 5 membrane-spanning stretches (helical) occupy residues 17 to 37 (AKPLIFMVCLLPFAWLFYAAW), 88 to 108 (LFAYFYVVLHLLSYSWFDMGF), 121 to 141 (PFILVGFSAFVLLTPLAATSF), 153 to 173 (WQLLHKLVYLIAGLGLLHFFW), and 184 to 204 (VFVYAAIVALLLGWRVWNHWA).

Belongs to the MsrQ family. Heterodimer of a catalytic subunit (MsrP) and a heme-binding subunit (MsrQ). FMN serves as cofactor. It depends on heme b as a cofactor.

It is found in the cell inner membrane. Part of the MsrPQ system that repairs oxidized periplasmic proteins containing methionine sulfoxide residues (Met-O), using respiratory chain electrons. Thus protects these proteins from oxidative-stress damage caused by reactive species of oxygen and chlorine generated by the host defense mechanisms. MsrPQ is essential for the maintenance of envelope integrity under bleach stress, rescuing a wide series of structurally unrelated periplasmic proteins from methionine oxidation. MsrQ provides electrons for reduction to the reductase catalytic subunit MsrP, using the quinone pool of the respiratory chain. In Polaromonas naphthalenivorans (strain CJ2), this protein is Protein-methionine-sulfoxide reductase heme-binding subunit MsrQ.